The sequence spans 1468 residues: DNA polymerase III PolC-type (1468 aa).

Positions 197–217 (QKSLEDSAPPSEEVTPTQNYD) are disordered. The 157-residue stretch at 430–586 (YVVFDVETTG…YDAEATGRLL (157 aa)) folds into the Exonuclease domain.

It belongs to the DNA polymerase type-C family. PolC subfamily.

The protein localises to the cytoplasm. It carries out the reaction DNA(n) + a 2'-deoxyribonucleoside 5'-triphosphate = DNA(n+1) + diphosphate. Functionally, required for replicative DNA synthesis. This DNA polymerase also exhibits 3' to 5' exonuclease activity. This Streptococcus agalactiae serotype III (strain NEM316) protein is DNA polymerase III PolC-type.